Reading from the N-terminus, the 197-residue chain is Ycf20-like protein (197 aa).

Helical transmembrane passes span 113–133 (MKIF…TILG), 138–158 (WDVL…MLMY), and 173–193 (FVVF…VDAF).

The protein belongs to the ycf20 family.

It localises to the membrane. The polypeptide is Ycf20-like protein (Arabidopsis thaliana (Mouse-ear cress)).